Consider the following 199-residue polypeptide: Holliday junction branch migration complex subunit RuvA (199 aa).

The interval 1–63 (MIAYIEGKLA…EDAHTLFGFA (63 aa)) is domain I. Residues 64 to 142 (DLMEKEMFLH…KDALLAGSDS (79 aa)) form a domain II region. Residues 143–151 (KQNFSVSHN) are flexible linker. The interval 151–199 (NSIRSEALTALITLGFTKTVAEKNLDLILKGNSNSFTLEDLIKQALKMS) is domain III.

This sequence belongs to the RuvA family. In terms of assembly, homotetramer. Forms an RuvA(8)-RuvB(12)-Holliday junction (HJ) complex. HJ DNA is sandwiched between 2 RuvA tetramers; dsDNA enters through RuvA and exits via RuvB. An RuvB hexamer assembles on each DNA strand where it exits the tetramer. Each RuvB hexamer is contacted by two RuvA subunits (via domain III) on 2 adjacent RuvB subunits; this complex drives branch migration. In the full resolvosome a probable DNA-RuvA(4)-RuvB(12)-RuvC(2) complex forms which resolves the HJ.

It is found in the cytoplasm. Functionally, the RuvA-RuvB-RuvC complex processes Holliday junction (HJ) DNA during genetic recombination and DNA repair, while the RuvA-RuvB complex plays an important role in the rescue of blocked DNA replication forks via replication fork reversal (RFR). RuvA specifically binds to HJ cruciform DNA, conferring on it an open structure. The RuvB hexamer acts as an ATP-dependent pump, pulling dsDNA into and through the RuvAB complex. HJ branch migration allows RuvC to scan DNA until it finds its consensus sequence, where it cleaves and resolves the cruciform DNA. The protein is Holliday junction branch migration complex subunit RuvA of Cytophaga hutchinsonii (strain ATCC 33406 / DSM 1761 / CIP 103989 / NBRC 15051 / NCIMB 9469 / D465).